We begin with the raw amino-acid sequence, 287 residues long: MAIRNFRPYTPGTRTRVVTDFSEVTGRKPERSLVVSKHRRKGRNNRGVITCRHRGGGHKRLYRVVDFRRNKHGITAKVAAIHYDPHRNARLALLFYADGEKRYILAPAGVQVGQTVVSGPDAPIENGNAMPLSAVPLGSSVHCVELYAGRGGQMVRTAGASAQVMAKEGDYVALKLPSTEVRLVRRECYATLGEVGNSEVRNTSLGKAGRRRWLGRRPQVRGSVMNPCDHPHGGGEGRAPIGRSGPVTPWGKPALGLKTRKRNKPSNRYVLRKRRKTSKRSRGGRDS.

A disordered region spans residues 221–287; sequence RGSVMNPCDH…SKRSRGGRDS (67 aa). Residues 258 to 287 are compositionally biased toward basic residues; it reads KTRKRNKPSNRYVLRKRRKTSKRSRGGRDS.

This sequence belongs to the universal ribosomal protein uL2 family. In terms of assembly, part of the 50S ribosomal subunit. Forms a bridge to the 30S subunit in the 70S ribosome.

One of the primary rRNA binding proteins. Required for association of the 30S and 50S subunits to form the 70S ribosome, for tRNA binding and peptide bond formation. It has been suggested to have peptidyltransferase activity; this is somewhat controversial. Makes several contacts with the 16S rRNA in the 70S ribosome. The protein is Large ribosomal subunit protein uL2 of Parasynechococcus marenigrum (strain WH8102).